A 538-amino-acid polypeptide reads, in one-letter code: Phosphoenolpyruvate carboxykinase (ATP) (538 aa).

Residues R64, Y205, and K211 each contribute to the substrate site. ATP-binding positions include K211, H230, and 246 to 254 (GLSGTGKTT). Positions 211 and 230 each coordinate Mn(2+). D267 is a Mn(2+) binding site. Residues E295, R331, 447-448 (RI), and T453 each bind ATP. A substrate-binding site is contributed by R331.

Belongs to the phosphoenolpyruvate carboxykinase (ATP) family. Monomer. Requires Mn(2+) as cofactor.

It localises to the cytoplasm. It catalyses the reaction oxaloacetate + ATP = phosphoenolpyruvate + ADP + CO2. Its pathway is carbohydrate biosynthesis; gluconeogenesis. In terms of biological role, involved in the gluconeogenesis. Catalyzes the conversion of oxaloacetate (OAA) to phosphoenolpyruvate (PEP) through direct phosphoryl transfer between the nucleoside triphosphate and OAA. The protein is Phosphoenolpyruvate carboxykinase (ATP) of Baumannia cicadellinicola subsp. Homalodisca coagulata.